Here is a 72-residue protein sequence, read N- to C-terminus: Translation initiation factor IF-1 (72 aa).

Positions 1–72 (MSKDDVIEVE…TRGRIIYRHK (72 aa)) constitute an S1-like domain.

This sequence belongs to the IF-1 family. As to quaternary structure, component of the 30S ribosomal translation pre-initiation complex which assembles on the 30S ribosome in the order IF-2 and IF-3, IF-1 and N-formylmethionyl-tRNA(fMet); mRNA recruitment can occur at any time during PIC assembly.

The protein localises to the cytoplasm. Its function is as follows. One of the essential components for the initiation of protein synthesis. Stabilizes the binding of IF-2 and IF-3 on the 30S subunit to which N-formylmethionyl-tRNA(fMet) subsequently binds. Helps modulate mRNA selection, yielding the 30S pre-initiation complex (PIC). Upon addition of the 50S ribosomal subunit IF-1, IF-2 and IF-3 are released leaving the mature 70S translation initiation complex. This is Translation initiation factor IF-1 from Carboxydothermus hydrogenoformans (strain ATCC BAA-161 / DSM 6008 / Z-2901).